We begin with the raw amino-acid sequence, 395 residues long: G-protein coupled receptor 182 (395 aa).

Over 1 to 53 (MSVIPSSRPVSTLAPDNDFREIHNWTELLHLFNQTFSDCHMELNENTKQVVLF) the chain is Extracellular. N-linked (GlcNAc...) asparagine glycosylation is found at Asn24 and Asn33. Residues 54–75 (VFYLAIFVVGLVENVLVICVNC) form a helical membrane-spanning segment. Over 76 to 86 (RRSGRVGMLNL) the chain is Cytoplasmic. Residues 87-109 (YILNMAVADLGIILSLPVWMLEV) form a helical membrane-spanning segment. The Extracellular segment spans residues 110 to 123 (MLEYTWLWGSFSCR). An intrachain disulfide couples Cys122 to Cys198. The helical transmembrane segment at 124–145 (FIHYFYLANMYSSIFFLTCLSI) threads the bilayer. Topologically, residues 146–166 (DRYVTLTNTSPSWQRHQHRIR) are cytoplasmic. The helical transmembrane segment at 167–189 (RAVCAGVWVLSAIIPLPEVVHIQ) threads the bilayer. Over 190 to 213 (LLDGSEPMCLFLAPFETYSAWALA) the chain is Extracellular. Residues 214–235 (VALSATILGFLLPFPLIAVFNI) traverse the membrane as a helical segment. Over 236-254 (LSACRLRRQGQTESRRHCL) the chain is Cytoplasmic. Residues 255 to 276 (LMWAYIVVFVICWLPYHVTMLL) form a helical membrane-spanning segment. Over 277–295 (LTLHTTHIFLHCNLVNFLY) the chain is Extracellular. A helical membrane pass occupies residues 296-316 (FFYEIIDCFSMLHCVANPILY). Residues 317-395 (NFLSPSFRGR…RTPHLHSAIP (79 aa)) are Cytoplasmic-facing. At Ser329 the chain carries Phosphoserine.

It belongs to the G-protein coupled receptor 1 family. Expressed in a wide variety of peripheral tissues in the adult rat with prominent expression in lung, testis, adrenal and liver.

The protein resides in the cell membrane. Orphan receptor. This is G-protein coupled receptor 182 (Gpr182) from Rattus norvegicus (Rat).